We begin with the raw amino-acid sequence, 466 residues long: Soluble pyridine nucleotide transhydrogenase (466 aa).

FAD is bound at residue E36–C45.

Belongs to the class-I pyridine nucleotide-disulfide oxidoreductase family. Homooligomer; probable homooctamer. It depends on FAD as a cofactor.

Its subcellular location is the cytoplasm. It carries out the reaction NAD(+) + NADPH = NADH + NADP(+). In terms of biological role, conversion of NADPH, generated by peripheral catabolic pathways, to NADH, which can enter the respiratory chain for energy generation. In Shigella flexneri, this protein is Soluble pyridine nucleotide transhydrogenase.